A 37-amino-acid chain; its full sequence is Photosystem II reaction center protein M (37 aa).

Residues 7 to 27 traverse the membrane as a helical segment; that stretch reads AFIAVLLFLAVPTAFLLIPYV.

It belongs to the PsbM family. PSII is composed of 1 copy each of membrane proteins PsbA, PsbB, PsbC, PsbD, PsbE, PsbF, PsbH, PsbI, PsbJ, PsbK, PsbL, PsbM, PsbT, PsbX, PsbY, PsbZ, Psb30/Ycf12, at least 3 peripheral proteins of the oxygen-evolving complex and a large number of cofactors. It forms dimeric complexes.

Its subcellular location is the plastid. It is found in the chloroplast thylakoid membrane. In terms of biological role, one of the components of the core complex of photosystem II (PSII). PSII is a light-driven water:plastoquinone oxidoreductase that uses light energy to abstract electrons from H(2)O, generating O(2) and a proton gradient subsequently used for ATP formation. It consists of a core antenna complex that captures photons, and an electron transfer chain that converts photonic excitation into a charge separation. This subunit is found at the monomer-monomer interface. In Pinus thunbergii (Japanese black pine), this protein is Photosystem II reaction center protein M.